The primary structure comprises 385 residues: 8-amino-7-oxononanoate synthase (385 aa).

Residue Arg-21 participates in substrate binding. Pyridoxal 5'-phosphate is bound at residue 108 to 109; that stretch reads GF. His-133 is a substrate binding site. Residues Ser-179, His-207, and Thr-233 each coordinate pyridoxal 5'-phosphate. Residue Lys-236 is modified to N6-(pyridoxal phosphate)lysine. Substrate is bound at residue Thr-352.

This sequence belongs to the class-II pyridoxal-phosphate-dependent aminotransferase family. BioF subfamily. As to quaternary structure, homodimer. It depends on pyridoxal 5'-phosphate as a cofactor.

It carries out the reaction 6-carboxyhexanoyl-[ACP] + L-alanine + H(+) = (8S)-8-amino-7-oxononanoate + holo-[ACP] + CO2. The protein operates within cofactor biosynthesis; biotin biosynthesis. Functionally, catalyzes the decarboxylative condensation of pimeloyl-[acyl-carrier protein] and L-alanine to produce 8-amino-7-oxononanoate (AON), [acyl-carrier protein], and carbon dioxide. The polypeptide is 8-amino-7-oxononanoate synthase (Salmonella enteritidis PT4 (strain P125109)).